The chain runs to 331 residues: GTP 3',8-cyclase (331 aa).

The region spanning 6-234 is the Radical SAM core domain; the sequence is PFNRKIDYLR…PATGKSHDGP (229 aa). Arginine 15 provides a ligand contact to GTP. Cysteine 22 and cysteine 26 together coordinate [4Fe-4S] cluster. Tyrosine 28 is a binding site for S-adenosyl-L-methionine. [4Fe-4S] cluster is bound at residue cysteine 29. Arginine 66 contributes to the GTP binding site. Glycine 70 serves as a coordination point for S-adenosyl-L-methionine. Residue serine 97 coordinates GTP. Serine 121 is a binding site for S-adenosyl-L-methionine. A GTP-binding site is contributed by lysine 158. Methionine 192 lines the S-adenosyl-L-methionine pocket. [4Fe-4S] cluster is bound by residues cysteine 258 and cysteine 261. 263–265 is a GTP binding site; the sequence is RVR. Residue cysteine 275 participates in [4Fe-4S] cluster binding.

The protein belongs to the radical SAM superfamily. MoaA family. As to quaternary structure, monomer and homodimer. Requires [4Fe-4S] cluster as cofactor.

It carries out the reaction GTP + AH2 + S-adenosyl-L-methionine = (8S)-3',8-cyclo-7,8-dihydroguanosine 5'-triphosphate + 5'-deoxyadenosine + L-methionine + A + H(+). It functions in the pathway cofactor biosynthesis; molybdopterin biosynthesis. Its function is as follows. Catalyzes the cyclization of GTP to (8S)-3',8-cyclo-7,8-dihydroguanosine 5'-triphosphate. This is GTP 3',8-cyclase from Hydrogenovibrio crunogenus (strain DSM 25203 / XCL-2) (Thiomicrospira crunogena).